Here is a 290-residue protein sequence, read N- to C-terminus: MPSLRDIRNRIGSVRSTRQITKAMKMVSAAKLRRAQDAVLKTRPYAVLLDQTLSRLAARAAAEEQVAHPLLAPRAQRTAEVVVVTSDRGLAGGFNSNICRFVQRFLTENADRFERIALSTVGKKGREYFKARRLEIRKDYTGVHANLAYEKAEALAREATERYLAGEVDAVFLAYNEFKSAISQKQVVVQLLPIDTSAAGADATGIDFKYEPSREALLAELLPRHVAMQVWRALLESAASEHGARMSAMESATKNAEEMIASLSLQYNRARQAYVTKELMEIVGGAEALK.

The protein belongs to the ATPase gamma chain family. In terms of assembly, F-type ATPases have 2 components, CF(1) - the catalytic core - and CF(0) - the membrane proton channel. CF(1) has five subunits: alpha(3), beta(3), gamma(1), delta(1), epsilon(1). CF(0) has three main subunits: a, b and c.

It is found in the cell inner membrane. Functionally, produces ATP from ADP in the presence of a proton gradient across the membrane. The gamma chain is believed to be important in regulating ATPase activity and the flow of protons through the CF(0) complex. This chain is ATP synthase gamma chain, found in Anaeromyxobacter sp. (strain K).